Consider the following 219-residue polypeptide: Chloramphenicol acetyltransferase (219 aa).

The active-site Proton acceptor is H190.

This sequence belongs to the chloramphenicol acetyltransferase family. Homotrimer.

It carries out the reaction chloramphenicol + acetyl-CoA = chloramphenicol 3-acetate + CoA. Its function is as follows. This enzyme is an effector of chloramphenicol resistance in bacteria. This Clostridium perfringens protein is Chloramphenicol acetyltransferase (catQ).